Here is a 611-residue protein sequence, read N- to C-terminus: Adenosylhomocysteinase 3 (611 aa).

3 stretches are compositionally biased toward low complexity: residues 1 to 14, 36 to 57, and 68 to 81; these read MSVQVVSAAAAAKV, AAVGAMAPPAGGGDPEAPAPAA, and GPAAALSPAAGKVP. The disordered stretch occupies residues 1-184; the sequence is MSVQVVSAAA…KQQKNSKGSS (184 aa). Ser-2 carries the post-translational modification N-acetylserine. Positions 2–109 are LISN domain, inhibits interaction with ITPR1; that stretch reads SVQVVSAAAA…DGGEALVSPD (108 aa). The residue at position 107 (Ser-107) is a Phosphoserine. Basic residues predominate over residues 135–144; that stretch reads RPTKIGRRSL. Positions 145–164 are enriched in low complexity; it reads SRSISQSSTDSYSSAASYTD. 4 positions are modified to phosphoserine: Ser-149, Ser-152, Ser-155, and Ser-158. Residues Thr-236, Asp-310, and Glu-335 each contribute to the substrate site. 336 to 338 is an NAD(+) binding site; the sequence is SVT. The substrate site is built by Lys-365 and Asp-369. NAD(+)-binding positions include Asn-370, 401–406, Glu-422, Asn-457, 478–479, and Asn-525; these read GEVGKG and MG.

The protein belongs to the adenosylhomocysteinase family. As to quaternary structure, homotetramer. Forms heteromultimers with AHCYL1 (via the C-terminal region). Interacts with ITPR1; with lower affinity than AHCYL1 and maybe via ITPR1. Interacts with SLC4A4. Interacts with ZCCHC4. NAD(+) is required as a cofactor. In terms of processing, phosphorylated during neuronal differentiation at the LISN domain.

The protein resides in the cytoplasm. Its subcellular location is the microsome. The enzyme catalyses S-adenosyl-L-homocysteine + H2O = L-homocysteine + adenosine. Its pathway is amino-acid biosynthesis; L-homocysteine biosynthesis; L-homocysteine from S-adenosyl-L-homocysteine: step 1/1. Functionally, may regulate the electrogenic sodium/bicarbonate cotransporter SLC4A4 activity and Mg(2+)-sensitivity. On the contrary of its homolog AHCYL1, does not regulate ITPR1 sensitivity to inositol 1,4,5-trisphosphate. This Homo sapiens (Human) protein is Adenosylhomocysteinase 3 (AHCYL2).